Here is a 358-residue protein sequence, read N- to C-terminus: MSKKKLPPSSHSPLSYRDAGVDIDAGNQLIQRIKPAANRTTRPGVLTSLGGFGSLFELPIHRYQHPVLVAGTDGVGTKLKLAIQLNRHDSIGIDLVAMCANDIIVQGAEPLFFLDYYATGRLEVDIAAEIIEGIAHGCELAGVALVGGETAEMPGIYQAGDYDLAGFCVGVVEKERLIDGSQVQAGDHLIGIASSGPHANGYSLIRKILERSRYSLNSPLADQTLGDALLTPTRIYVKPLLQLLEVIEIHALAHITGGGLPENLPRVLPPMLSAEIDTSRWPRLPIFDWLQREGNLSEQELYRTFNCGIGMVVCVDQADTEQALEFLKDRGESAWLIGRIVPQTSDGQRVAFNTGNPL.

Belongs to the AIR synthase family.

The protein resides in the cytoplasm. The catalysed reaction is 2-formamido-N(1)-(5-O-phospho-beta-D-ribosyl)acetamidine + ATP = 5-amino-1-(5-phospho-beta-D-ribosyl)imidazole + ADP + phosphate + H(+). Its pathway is purine metabolism; IMP biosynthesis via de novo pathway; 5-amino-1-(5-phospho-D-ribosyl)imidazole from N(2)-formyl-N(1)-(5-phospho-D-ribosyl)glycinamide: step 2/2. This chain is Phosphoribosylformylglycinamidine cyclo-ligase, found in Nitrosococcus oceani (strain ATCC 19707 / BCRC 17464 / JCM 30415 / NCIMB 11848 / C-107).